Reading from the N-terminus, the 338-residue chain is MAISPKKRALALVVVLIVAGAVAYYFLSRHHAPEKTVTIYGNIDIRQVQAAFDDNGRLLDLRVQEGDRVKKGQLLADLDPVRFQDAVDKDAAVWPRKSRCWRACWRVPVRKKSPRPGPKPAAAQATLSNAEITWQRQQALAARQYVPKQSLDNAAAALKTARANLDRAQQALTLAIKGPRKEDIAAARQQLQADKAGLSLARRELTDTRLYAPEDGVVQDRILEPGDMVSPQTPVFTLALDNPVWVRAYLPEKALGQVRLGMKATISSDSFPGKSFPGWVGFISPTAEFTPKTVQTTELRTELVYRVRVYACNPQHRLRLGMPVTVHIPLTDNQPQKL.

The first 23 residues, methionine 1 to alanine 23, serve as a signal peptide directing secretion. The stretch at lysine 148–aspartate 207 forms a coiled coil.

Belongs to the UPF0194 family.

It is found in the periplasm. The polypeptide is UPF0194 membrane protein in asrC 5'region (Acidithiobacillus ferridurans).